The primary structure comprises 755 residues: MSASPLLDNQCDHLPTKMVDLTMVDKADELDRRVSDAFLEREASRGRRITQISTECSAGLACKRLADGRFPEISAGGKVAVLSAYIYIGKEILGRILESKPWARATVSGLVAIDLAPFCMDFSEAQLIQALFLLSGKRCAPIDLSHFVAISISKTAGFRTLPMPLYENGTMKCVTGFTITLEGAVPFDMVAYGRNLMLKGSAGSFPTIDLLYDYRPFFDQCSDSGRIGFFPEDVPKPKVAVIGAGISGLVVANELLHAGVDDVTIYEASDRVGGKLWSHAFRDAPSVVAEMGAMRFPPAAFCLFFFLERYGLSSMRPFPNPGTVDTYLVYQGVQYMWKAGQLPPKLFHRVYNGWRAFLKDGFYERDIVLASPVAITQALKSGDIRWAHDSWQIWLNRFGRESFSSGIERIFLGTHPPGGETWSFPHDWDLFKLMGIGSGGFGPVFESGFIEILRLVINGYEENQRMCPEGISELPRRIASEVVNGVSVSQRICHVQVRAIQKEKTKIKIRLKSGISELYDKVVVTSGLANIQLRHCLTCDTNIFQAPVNQAVDNSHMTGSSKLFLMTERKFWLDHILPSCVLMDGIAKAVYCLDYEPQDPNGKGLVLISYTWEDDSHKLLAVPDKKERLCLLRDAISRSFPAFAQHLFPACADYDQNVIQHDWLTDENAGGAFKLNRRGEDFYSEELFFQALDTANDTGVYLAGCSCSFTGGWVEGAIQTACNAVCAIIHNCGGILAKGNPLEHSWKRYNYRTRN.

Positions 247, 267, 275, and 295 each coordinate FMN. Position 295 (Arg295) interacts with substrate.

This sequence belongs to the tryptophan 2-monooxygenase family. FMN serves as cofactor.

The catalysed reaction is L-tryptophan + O2 = indole-3-acetamide + CO2 + H2O. Its pathway is plant hormone metabolism; auxin biosynthesis. The protein is Tryptophan 2-monooxygenase (tms1) of Rhizobium radiobacter (Agrobacterium tumefaciens).